We begin with the raw amino-acid sequence, 394 residues long: Elongation factor Tu (394 aa).

Residues 10–204 (KPHVNIGTIG…AVDSYIPQPV (195 aa)) enclose the tr-type G domain. The G1 stretch occupies residues 19–26 (GHVDHGKT). Residue 19-26 (GHVDHGKT) coordinates GTP. Threonine 26 contributes to the Mg(2+) binding site. Positions 60–64 (GITIS) are G2. The tract at residues 81–84 (DCPG) is G3. GTP is bound by residues 81 to 85 (DCPGH) and 136 to 139 (NKID). The interval 136–139 (NKID) is G4. A G5 region spans residues 174–176 (SAL).

Belongs to the TRAFAC class translation factor GTPase superfamily. Classic translation factor GTPase family. EF-Tu/EF-1A subfamily. Monomer.

It localises to the cytoplasm. The catalysed reaction is GTP + H2O = GDP + phosphate + H(+). Functionally, GTP hydrolase that promotes the GTP-dependent binding of aminoacyl-tRNA to the A-site of ribosomes during protein biosynthesis. The protein is Elongation factor Tu of Rickettsia conorii (strain ATCC VR-613 / Malish 7).